A 204-amino-acid chain; its full sequence is Leucyl/phenylalanyl-tRNA--protein transferase (204 aa).

Belongs to the L/F-transferase family.

It localises to the cytoplasm. It carries out the reaction N-terminal L-lysyl-[protein] + L-leucyl-tRNA(Leu) = N-terminal L-leucyl-L-lysyl-[protein] + tRNA(Leu) + H(+). The catalysed reaction is N-terminal L-arginyl-[protein] + L-leucyl-tRNA(Leu) = N-terminal L-leucyl-L-arginyl-[protein] + tRNA(Leu) + H(+). The enzyme catalyses L-phenylalanyl-tRNA(Phe) + an N-terminal L-alpha-aminoacyl-[protein] = an N-terminal L-phenylalanyl-L-alpha-aminoacyl-[protein] + tRNA(Phe). Its function is as follows. Functions in the N-end rule pathway of protein degradation where it conjugates Leu, Phe and, less efficiently, Met from aminoacyl-tRNAs to the N-termini of proteins containing an N-terminal arginine or lysine. This is Leucyl/phenylalanyl-tRNA--protein transferase from Brucella anthropi (strain ATCC 49188 / DSM 6882 / CCUG 24695 / JCM 21032 / LMG 3331 / NBRC 15819 / NCTC 12168 / Alc 37) (Ochrobactrum anthropi).